Reading from the N-terminus, the 93-residue chain is Small ribosomal subunit protein bS20c (93 aa).

The protein belongs to the bacterial ribosomal protein bS20 family.

The protein localises to the plastid. Its subcellular location is the chloroplast. Its function is as follows. Binds directly to 16S ribosomal RNA. In Phaeodactylum tricornutum (strain CCAP 1055/1), this protein is Small ribosomal subunit protein bS20c.